Here is a 277-residue protein sequence, read N- to C-terminus: Phosphoribosylaminoimidazole-succinocarboxamide synthase (277 aa).

Belongs to the SAICAR synthetase family.

The enzyme catalyses 5-amino-1-(5-phospho-D-ribosyl)imidazole-4-carboxylate + L-aspartate + ATP = (2S)-2-[5-amino-1-(5-phospho-beta-D-ribosyl)imidazole-4-carboxamido]succinate + ADP + phosphate + 2 H(+). It participates in purine metabolism; IMP biosynthesis via de novo pathway; 5-amino-1-(5-phospho-D-ribosyl)imidazole-4-carboxamide from 5-amino-1-(5-phospho-D-ribosyl)imidazole-4-carboxylate: step 1/2. This chain is Phosphoribosylaminoimidazole-succinocarboxamide synthase, found in Salinispora tropica (strain ATCC BAA-916 / DSM 44818 / JCM 13857 / NBRC 105044 / CNB-440).